A 3011-amino-acid chain; its full sequence is Genome polyprotein (3011 aa).

An N-acetylserine; by host modification is found at serine 2. Positions 2–23 (STNPKPQRKTKRNTNRRPQDVK) are interaction with STAT1. The tract at residues 2 to 58 (STNPKPQRKTKRNTNRRPQDVKFPGGGQIVGGVYLLPRRGPRLGVRATRKTSERSQP) is interaction with EIF2AK2/PKR. The interval 2 to 59 (STNPKPQRKTKRNTNRRPQDVKFPGGGQIVGGVYLLPRRGPRLGVRATRKTSERSQPR) is interaction with DDX3X. The tract at residues 2-75 (STNPKPQRKT…PKARRPEGRT (74 aa)) is disordered. Residues 2-168 (STNPKPQRKT…EDGVNYATGN (167 aa)) are Cytoplasmic-facing. 2 short sequence motifs (nuclear localization signal) span residues 5–13 (PKPQRKTKR) and 38–43 (PRRGPR). Over residues 7–16 (PQRKTKRNTN) the composition is skewed to basic residues. Over residues 32 to 47 (GGVYLLPRRGPRLGVR) the composition is skewed to low complexity. Serine 53 is modified (phosphoserine; by host). 2 consecutive short sequence motifs (nuclear localization signal) follow at residues 58-64 (PRGRRQP) and 66-71 (PKARRP). Residues 58–68 (PRGRRQPIPKA) show a composition bias toward basic residues. Serine 99 is subject to Phosphoserine; by host. Residues 112–152 (PRRRSRNLGKVIDTLTCGFADLMGYIPLVGAPLGGAARALA) form an important for endoplasmic reticulum and mitochondrial localization region. Residue serine 116 is modified to Phosphoserine; by host PKA. The interaction with APOA2 stretch occupies residues 122–173 (VIDTLTCGFADLMGYIPLVGAPLGGAARALAHGVRVLEDGVNYATGNLPGCS). Residues 164–167 (YATG) form an important for lipid droplets localization region. Residues 169 to 189 (LPGCSFSIFLLALLSCLTVPA) form a helical membrane-spanning segment. The propeptide at 178 to 191 (LLALLSCLTVPASA) is ER anchor for the core protein, removed in mature form by host signal peptidase. Residues 190–358 (SAYQVRNSSG…AGAHWGVLAG (169 aa)) are Lumenal-facing. Residues asparagine 196, asparagine 209, and asparagine 234 are each glycosylated (N-linked (GlcNAc...) asparagine; by host). Residues 265 to 296 (LVGSATLCSALYVGDLCGSVFLVGQLFTFSPR) are important for fusion. Residue asparagine 305 is glycosylated (N-linked (GlcNAc...) asparagine; by host). Residues 359–379 (IKYFSMVGNWAKVLVVLLLFA) form a helical membrane-spanning segment. The Lumenal portion of the chain corresponds to 380–725 (GVDAETHVTG…WEYVVLLFLL (346 aa)). Residues 385 to 411 (THVTGGNAGRTTAGLVGLLTPGAKQNI) form an HVR1 region. Residues asparagine 417, asparagine 423, asparagine 430, and asparagine 448 are each glycosylated (N-linked (GlcNAc...) (high mannose) asparagine; by host). Intrachain disulfides connect cysteine 429–cysteine 552, cysteine 452–cysteine 459, cysteine 486–cysteine 494, and cysteine 503–cysteine 508. The segment at 474–479 (YANGSG) is HVR2. Asparagine 476 carries an N-linked (GlcNAc...) (high mannose) asparagine; by host glycan. The segment at 480 to 493 (LDERPYCWHYPPRP) is CD81-binding 1. Residues asparagine 532 and asparagine 540 are each glycosylated (N-linked (GlcNAc...) (high mannose) asparagine; by host). The interval 544–551 (PPLGNWFG) is CD81-binding 2. Asparagine 556 is a glycosylation site (N-linked (GlcNAc...) (high mannose) asparagine; by host). A disulfide bridge links cysteine 564 with cysteine 569. An N-linked (GlcNAc...) (high mannose) asparagine; by host glycan is attached at asparagine 576. 3 cysteine pairs are disulfide-bonded: cysteine 581–cysteine 585, cysteine 597–cysteine 620, and cysteine 607–cysteine 644. N-linked (GlcNAc...) (high mannose) asparagine; by host glycosylation is found at asparagine 623 and asparagine 645. The cysteines at positions 652 and 677 are disulfide-linked. The interval 660–671 (SELSPLLLSTTQ) is EIF2AK2/eIF2-alpha phosphorylation homology domain (PePHD). A helical membrane pass occupies residues 726–746 (LADARVCSCLWMMLLISQAEA). The Lumenal segment spans residues 747–757 (ALENLVILNAA). A helical transmembrane segment spans residues 758–778 (SLAGTHGLVSFLVFFCFAWYL). The Cytoplasmic portion of the chain corresponds to 779–781 (KGR). The chain crosses the membrane as a helical span at residues 782-803 (WVPGAVYALYGMWPLLLLLLAL). The Lumenal segment spans residues 804-813 (PQRAYALDTE). Residues 814-834 (VAASCGGVVLVGLMALTLSPY) traverse the membrane as a helical segment. The Cytoplasmic segment spans residues 835 to 838 (YKRY). The helical transmembrane segment at 839–859 (ISWCMWWLQYFLTRVEAQLHV) threads the bilayer. Residues 860 to 881 (WVPPLNVRGGRDAVILLTCVVH) lie on the Lumenal side of the membrane. A helical membrane pass occupies residues 882–902 (PALVFDITKLLLAIFGPLWIL). Residues 899–1026 (LWILQASLLK…GMVSKGWRLL (128 aa)) form the Peptidase C18 domain. Over 903–1657 (QASLLKVPYF…CMSADLEVVT (755 aa)) the chain is Cytoplasmic. The tract at residues 904 to 1206 (ASLLKVPYFV…PVENLETTMR (303 aa)) is protease NS2-3. The S-palmitoyl cysteine; by host moiety is linked to residue cysteine 922. The interaction with host SCPS1 stretch occupies residues 929–949 (AGGHYVQMAIIKLGALTGTCV). Active-site for protease NS2 activity; shared with dimeric partner residues include histidine 952, glutamate 972, and cysteine 993. Positions 1027–1208 (APITAYAQQT…ENLETTMRSP (182 aa)) constitute a Peptidase S29 domain. Catalysis depends on charge relay system; for serine protease NS3 activity residues histidine 1083 and aspartate 1107. Cysteine 1123 and cysteine 1125 together coordinate Zn(2+). The Charge relay system; for serine protease NS3 activity role is filled by serine 1165. Zn(2+) is bound by residues cysteine 1171 and histidine 1175. The 153-residue stretch at 1217 to 1369 (PAVPQSFQVA…PNIEEVALST (153 aa)) folds into the Helicase ATP-binding domain. ATP is bound at residue 1230 to 1237 (APTGSGKS). Mg(2+) is bound by residues serine 1237 and glutamate 1317. A DECH box motif is present at residues 1316–1319 (DECH). The segment at 1486–1497 (QRRGRTGRGKPG) is RNA-binding. A helical transmembrane segment spans residues 1658–1678 (STWVLVGGVLAALAAYCLSTG). The NS3-binding stretch occupies residues 1679 to 1690 (CVVIVGRIVLSG). The Cytoplasmic segment spans residues 1679–1805 (CVVIVGRIVL…AVTSPLTTGQ (127 aa)). The helical transmembrane segment at 1806–1824 (TLLFNILGGWVAAQLAAPG) threads the bilayer. The Lumenal segment spans residues 1825–1828 (AATA). The helical transmembrane segment at 1829-1849 (FVGAGLAGAALDSVGLGKVLV) threads the bilayer. The tract at residues 1833–1861 (GLAGAALDSVGLGKVLVDILAGYGAGVAG) is glycine zipper. Aspartate 1850 is a topological domain (cytoplasmic). A helical transmembrane segment spans residues 1851–1871 (ILAGYGAGVAGALVAFKIMSG). Residues 1872 to 1881 (EVPSTEDLVN) are Lumenal-facing. A helical transmembrane segment spans residues 1882-1902 (LLPAILSPGALAVGVVFASIL). Residues 1903–1972 (RRRVGPGEGA…WISSECTTPC (70 aa)) lie on the Cytoplasmic side of the membrane. Cysteine 1968 carries the S-palmitoyl cysteine; by host lipid modification. Cysteine 1972 carries the S-palmitoyl cysteine; by host; partial lipid modification. An intramembrane segment occupies 1973 to 2003 (SGSWLRDIWDWICEVLSDFKTWLKAKLMPQL). Positions 1978–1998 (RDIWDWICEVLSDFKTWLKAK) are membrane-binding. Topologically, residues 2004-2990 (PGIPFVSCQR…YHSVSHARPR (987 aa)) are cytoplasmic. The D1; RNA-binding stretch occupies residues 2005–2221 (GIPFVSCQRG…KATCTANHDS (217 aa)). Residues cysteine 2011, cysteine 2029, cysteine 2031, and cysteine 2052 each coordinate Zn(2+). An FKBP8-binding region spans residues 2120-2208 (EFFTELDGVR…ASSSASQLSA (89 aa)). The transcriptional activation stretch occupies residues 2120–2332 (EFFTELDGVR…PVPPPRKKRT (213 aa)). Positions 2135–2139 (PPCKP) are interaction with non-structural protein 4A. The interaction with host SKP2 stretch occupies residues 2189–2441 (RLARGSPPSM…TPCAAEEQKL (253 aa)). Serine 2194 bears the Phosphoserine; by host; in p56 mark. Serine 2197 carries the phosphoserine; by host; in p58 modification. Phosphoserine; by host; in p56 and p58, regulates intracellular NS5A distribution is present on serine 2201. Serine 2204, serine 2207, and serine 2210 each carry phosphoserine; by host; in p58. Residues 2210-2249 (SLKATCTANHDSPDAELIEANLLWRQEMGGNITRVESENK) are ISDR. The interval 2210–2275 (SLKATCTANH…REVSVPAEIL (66 aa)) is interaction with EIF2AK2/PKR. Residues 2223 to 2315 (DAELIEANLL…YEPPVVHGCP (93 aa)) are D2. The disordered stretch occupies residues 2224–2315 (AELIEANLLW…YEPPVVHGCP (92 aa)). Residues 2249 to 2306 (KVVILDSFDPLVAEEDEREVSVPAEILRKSRRFAPALPVWARPDYNPLLVETWKKPDY) are NS4B-binding. The interaction with human PPIA/CYPA stretch occupies residues 2281–2297 (FAPALPVWARPDYNPLL). A compositionally biased stretch (pro residues) spans 2315–2326 (PLPPPRSPPVPP). Serine 2321 bears the Phosphoserine; by host mark. The SH3-binding signature appears at 2322-2325 (PPVP). The Nuclear localization signal signature appears at 2326 to 2334 (PPRKKRTVV). The interval 2329–2420 (KKRTVVLTES…GADTEDVVCC (92 aa)) is D3. The interval 2332 to 2441 (TVVLTESTLP…TPCAAEEQKL (110 aa)) is interaction with host IFI27. The disordered stretch occupies residues 2346 to 2409 (ELATKSFGSS…LSDGSWSTVS (64 aa)). Low complexity predominate over residues 2349-2369 (TKSFGSSSTSGITGDNTTTSS). Lysine 2350 is covalently cross-linked (Glycyl lysine isopeptide (Lys-Gly) (interchain with G-Cter in ubiquitin)). The segment at 2354-2377 (SSSTSGITGDNTTTSSEPAPSGCP) is V3. Residues 2367 to 2417 (TSSEPAPSGCPPDSDVESYSSMPPLEGEPGDPDLSDGSWSTVSSGADTEDV) form an interaction with host VAPB region. Phosphoserine; by host is present on residues serine 2449 and serine 2462. Residues 2634 to 2752 (PMGLSYDTRC…ICESAGVQED (119 aa)) form the RdRp catalytic domain. 3 residues coordinate Mg(2+): aspartate 2640, aspartate 2738, and aspartate 2739. Residues 2991-3011 (WFWFCLLLLAAGVGIYLLPNR) form a helical membrane-spanning segment.

Belongs to the hepacivirus polyprotein family. In terms of assembly, homooligomer. Interacts with E1 (via C-terminus). Interacts with the non-structural protein 5A. Interacts (via N-terminus) with host STAT1 (via SH2 domain); this interaction results in decreased STAT1 phosphorylation and ubiquitin-mediated proteasome-dependent STAT1 degradation, leading to decreased IFN-stimulated gene transcription. Interacts with host STAT3; this interaction constitutively activates STAT3. Associates with host LTBR receptor. Interacts with host TNFRSF1A receptor and possibly induces apoptosis. Interacts with host HNRPK. Interacts with host YWHAE. Interacts with host UBE3A/E6AP. Interacts with host DDX3X. Interacts with host APOA2. Interacts with host RXRA protein. Interacts with host SP110 isoform 3/Sp110b; this interaction sequesters the transcriptional corepressor SP110 away from the nucleus. Interacts with host CREB3 nuclear transcription protein; this interaction triggers cell transformation. Interacts with host ACY3. Interacts with host C1QR1. Interacts with host RBM24; this interaction, which enhances the interaction of the mature core protein with 5'-UTR, may inhibit viral translation and favor replication. Interacts (via N-terminus) with host EIF2AK2/PKR (via N-terminus); this interaction induces the autophosphorylation of EIF2AK2. Part of the viral assembly initiation complex composed of NS2, E1, E2, NS3, NS4A, NS5A and the mature core protein. Forms a heterodimer with envelope glycoprotein E2. Interacts with mature core protein. Interacts with protease NS2. The heterodimer E1/E2 interacts with host CLDN1; this interaction plays a role in viral entry into host cell. Interacts with host SPSB2 (via C-terminus). Part of the viral assembly initiation complex composed of NS2, E1, E2, NS3, NS4A, NS5A and the mature core protein. Interacts with host NEURL3; this interaction prevents E1 binding to glycoprotein E2. As to quaternary structure, forms a heterodimer with envelope glycoprotein E1. Interacts with host CD81 and SCARB1 receptors; these interactions play a role in viral entry into host cell. Interacts with host EIF2AK2/PKR; this interaction inhibits EIF2AK2 and probably allows the virus to evade the innate immune response. Interacts with host CD209/DC-SIGN and CLEC4M/DC-SIGNR. Interact with host SPCS1; this interaction is essential for viral particle assembly. Interacts with protease NS2. The heterodimer E1/E2 interacts with host CLDN1; this interaction plays a role in viral entry into host cell. Part of the viral assembly initiation complex composed of NS2, E1, E2, NS3, NS4A, NS5A and the mature core protein. Interacts with host SLC3A2/4F2hc; the interaction may facilitate viral entry into host cell. Interacts with human PLSCR1. In terms of assembly, homohexamer. Homoheptamer. Interacts with protease NS2. Homodimer. Interacts with host SPCS1; this interaction is essential for viral particle assembly. Interacts with envelope glycoprotein E1. Interacts with envelope glycoprotein E2. Interacts with viroporin p7. Interacts with serine protease/helicase NS3. Part of the replication complex composed of NS2, NS3, NS4A, NS4B, NS5A and the RNA-directed RNA polymerase embedded in an ER-derived membranous web. Part of the viral assembly initiation complex composed of NS2, E1, E2, NS3, NS4A, NS5A and the mature core protein. As to quaternary structure, interacts with protease NS2. Interacts with non-structural protein 4A; this interaction stabilizes the folding of NS3 serine protease. NS3-NS4A interaction is essential for NS3 activation and allows membrane anchorage of the latter. NS3/NS4A complex also prevents phosphorylation of host IRF3, thus preventing the establishment of dsRNA induced antiviral state. Interacts with host MAVS; this interaction leads to the cleavage and inhibition of host MAVS. Interacts with host TICAM1; this interaction leads to the cleavage and inhibition of host TICAM1. Interacts with host TANK-binding kinase/TBK1; this interaction results in the inhibition of the association between TBK1 and IRF3, which leads to the inhibition of IRF3 activation. Interacts with host RBM24. Part of the replication complex composed of NS2, NS3, NS4A, NS4B, NS5A and the RNA-directed RNA polymerase embedded in an ER-derived membranous web. Part of the viral assembly initiation complex composed of NS2, E1, E2, NS3, NS4A, NS5A and the mature core protein. In terms of assembly, interacts with NS3 serine protease; this interaction stabilizes the folding of NS3 serine protease. NS3-NS4A interaction is essential for NS3 activation and allows membrane anchorage of the latter. Interacts with non-structural protein 5A (via N-terminus). Part of the replication complex composed of NS2, NS3, NS4A, NS4B, NS5A and the RNA-directed RNA polymerase embedded in an ER-derived membranous web. Part of the viral assembly initiation complex composed of NS2, E1, E2, NS3, NS4A, NS5A and the mature core protein. Homomultimer. Interacts with non-structural protein NS5A. Interacts with host PLA2G4C; this interaction likely initiates the recruitment of replication complexes to lipid droplets. Interacts with host STING; this interaction disrupts the interaction between STING and TBK1 thereby suppressing the interferon signaling. Interacts with host METTL22; this interaction may promote the recruitment of NS4B in the proximity of lipid droplet. Part of the replication complex composed of NS2, NS3, NS4A, NS4B, NS5A and the RNA-directed RNA polymerase embedded in an ER-derived membranous web. As to quaternary structure, monomer. Homodimer; dimerization is required for RNA-binding. Interacts with the mature core protein. Interacts (via N-terminus) with non-structural protein 4A. Interacts with non-structural protein 4B. Interacts (via region D2) with RNA-directed RNA polymerase. Part of the viral assembly initiation complex composed of NS2, E1, E2, NS3, NS4A, NS5A and the mature core protein. Part of the replication complex composed of NS2, NS3, NS4A, NS4B, NS5A and the RNA-directed RNA polymerase embedded in an ER-derived membranous web. Interacts with host GRB2. Interacts with host BIN1. Interacts with host PIK3R1. Interacts with host SRCAP. Interacts with host FKBP8. Interacts (via C-terminus) with host VAPB (via MSP domain). Interacts with host EIF2AK2/PKR; this interaction leads to disruption of EIF2AK2 dimerization by NS5A and probably allows the virus to evade the innate immune response. Interacts (via N-terminus) with host PACSIN2 (via N-terminus); this interaction attenuates protein kinase C alpha-mediated phosphorylation of PACSIN2 by disrupting the interaction between PACSIN2 and PRKCA. Interacts (via N-terminus) with host SRC kinase (via SH2 domain). Interacts with most Src-family kinases. Interacts with host IFI27 and SKP2; promotes the ubiquitin-mediated proteasomal degradation of NS5A. Interacts with host GPS2. Interacts with host TNFRSF21; this interaction allows the modulation by the virus of JNK, p38 MAPK, STAT3, and Akt signaling pathways in a DR6-dependent manner. Interacts (via N-terminus) with host CIDEB (via N-terminus); this interaction seems to regulate the association of HCV particles with APOE. Interacts with host CHKA/Choline Kinase-alpha; CHKA bridges host PI4KA and NS5A and potentiates NS5A-stimulated PI4KA activity, which then facilitates the targeting of the ternary complex to the ER for viral replication. Interacts with host SPSB2 (via C-terminus); this interaction targets NS5A for ubiquitination and degradation. Interacts with host RAB18; this interaction may promote the association of NS5A and other replicase components with lipid droplets. Interacts (via region D2) with host PPIA/CYPA; the interaction stimulates RNA-binding ability of NS5A and is dependent on the peptidyl-prolyl cis-trans isomerase activity of PPIA/CYPA. Interacts with host TRIM14; this interaction induces the degradation of NS5A. In terms of assembly, homooligomer. Interacts with non-structural protein 5A. Interacts with host VAPB. Interacts with host PRK2/PKN2. Interacts with host HNRNPA1 and SEPT6; these interactions facilitate the viral replication. Part of the replication complex composed of NS2, NS3, NS4A, NS4B, NS5A and the RNA-directed RNA polymerase embedded in an ER-derived membranous web. It depends on Zn(2+) as a cofactor. Mg(2+) serves as cofactor. Specific enzymatic cleavages in vivo yield mature proteins. The structural proteins, core, E1, E2 and p7 are produced by proteolytic processing by host signal peptidases. The core protein precursor is synthesized as a 23 kDa, which is retained in the ER membrane through the hydrophobic signal peptide. Cleavage by the signal peptidase releases the 21 kDa mature core protein. The cleavage of the core protein precursor occurs between aminoacids 176 and 188 but the exact cleavage site is not known. Some degraded forms of the core protein appear as well during the course of infection. The other proteins (p7, NS2, NS3, NS4A, NS4B, NS5A and NS5B) are cleaved by the viral proteases. Autoprocessing between NS2 and NS3 is mediated by the NS2 cysteine protease catalytic domain and regulated by the NS3 N-terminal domain. Post-translationally, phosphorylated by host PKC and PKA. In terms of processing, ubiquitinated; mediated by UBE3A and leading to core protein subsequent proteasomal degradation. Highly N-glycosylated. Post-translationally, palmitoylation is required for NS2/3 autoprocessing and E2 recruitment to membranes. In terms of processing, palmitoylated. This modification may play a role in its polymerization or in protein-protein interactions. Cleaved by host caspases which are probably activated by the viral infection. Post-translationally, ubiquitinated. Ubiquitination, most probably at Lys-2350, mediated by host IFI27 and SKP2 leads to proteasomal degradation, restricting viral infection. Ubiquitination by host TRIM22 leads to interruption of viral replication. In terms of processing, phosphorylated on serines in a basal form termed p56. p58 is a hyperphosphorylated form of p56. p56 and p58 coexist in the cell in roughly equivalent amounts. Hyperphosphorylation is dependent on the presence of NS4A. Host CSNK1A1/CKI-alpha, PI4KA or RPS6KB1 kinases may be responsible for NS5A phosphorylation. Phosphorylated NS5A is involved in viral replication. Tyrosine phosphorylation is essential for the interaction with host SRC. Post-translationally, the N-terminus is phosphorylated by host PRK2/PKN2.

It is found in the host endoplasmic reticulum membrane. It localises to the host mitochondrion membrane. The protein localises to the virion. Its subcellular location is the host cytoplasm. The protein resides in the host nucleus. It is found in the host lipid droplet. It localises to the virion membrane. The protein localises to the host mitochondrion. Its subcellular location is the host cell membrane. The protein resides in the host perinuclear region. The enzyme catalyses Hydrolysis of four peptide bonds in the viral precursor polyprotein, commonly with Asp or Glu in the P6 position, Cys or Thr in P1 and Ser or Ala in P1'.. The catalysed reaction is a ribonucleoside 5'-triphosphate + H2O = a ribonucleoside 5'-diphosphate + phosphate + H(+). It catalyses the reaction ATP + H2O = ADP + phosphate + H(+). It carries out the reaction RNA(n) + a ribonucleoside 5'-triphosphate = RNA(n+1) + diphosphate. Its activity is regulated as follows. Inhibited by the antiviral drug hexamethylene amiloride. Inhibited by amantadine. Inhibition by amantadine appears to be genotype-dependent. Also inhibited by long-alkyl-chain iminosugar derivatives. With respect to regulation, activity is up-regulated by PRK2/PKN2-mediated phosphorylation. Packages viral RNA to form a viral nucleocapsid, and promotes virion budding. Participates in the viral particle production as a result of its interaction with the non-structural protein 5A. Binds RNA and may function as a RNA chaperone to induce the RNA structural rearrangements taking place during virus replication. Modulates viral translation initiation by interacting with viral IRES and 40S ribosomal subunit. Affects various cell signaling pathways, host immunity and lipid metabolism. Prevents the establishment of cellular antiviral state by blocking the interferon-alpha/beta (IFN-alpha/beta) and IFN-gamma signaling pathways and by blocking the formation of phosphorylated STAT1 and promoting ubiquitin-mediated proteasome-dependent degradation of STAT1. Activates STAT3 leading to cellular transformation. Regulates the activity of cellular genes, including c-myc and c-fos. May repress the promoter of p53, and sequester CREB3 and SP110 isoform 3/Sp110b in the cytoplasm. Represses cell cycle negative regulating factor CDKN1A, thereby interrupting an important check point of normal cell cycle regulation. Targets transcription factors involved in the regulation of inflammatory responses and in the immune response: suppresses NF-kappa-B activation, and activates AP-1. Binds to dendritic cells (DCs) via C1QR1, resulting in down-regulation of T-lymphocytes proliferation. Alters lipid metabolism by interacting with hepatocellular proteins involved in lipid accumulation and storage. Induces up-regulation of FAS promoter activity, and thereby contributes to the increased triglyceride accumulation in hepatocytes (steatosis). In terms of biological role, forms a heterodimer with envelope glycoprotein E2, which mediates virus attachment to the host cell, virion internalization through clathrin-dependent endocytosis and fusion with host membrane. Fusion with the host cell is most likely mediated by both E1 and E2, through conformational rearrangements of the heterodimer required for fusion rather than a classical class II fusion mechanism. E1/E2 heterodimer binds host apolipoproteins such as APOB and APOE thereby forming a lipo-viro-particle (LVP). APOE associated to the LVP allows the initial virus attachment to cell surface receptors such as the heparan sulfate proteoglycans (HSPGs), syndecan-1 (SDC1), syndecan-1 (SDC2), the low-density lipoprotein receptor (LDLR) and scavenger receptor class B type I (SCARB1). The cholesterol transfer activity of SCARB1 allows E2 exposure and binding of E2 to SCARB1 and the tetraspanin CD81. E1/E2 heterodimer binding on CD81 activates the epithelial growth factor receptor (EGFR) signaling pathway. Diffusion of the complex E1/E2-EGFR-SCARB1-CD81 to the cell lateral membrane allows further interaction with Claudin 1 (CLDN1) and occludin (OCLN) to finally trigger HCV entry. Functionally, forms a heterodimer with envelope glycoprotein E1, which mediates virus attachment to the host cell, virion internalization through clathrin-dependent endocytosis and fusion with host membrane. Fusion with the host cell is most likely mediated by both E1 and E2, through conformational rearrangements of the heterodimer required for fusion rather than a classical class II fusion mechanism. The interaction between E2 and host apolipoprotein E/APOE allows the proper assembly, maturation and infectivity of the viral particles. This interaction is probably promoted via the up-regulation of cellular autophagy by the virus. E1/E2 heterodimer binds host apolipoproteins such as APOB and APOE thereby forming a lipo-viro-particle (LVP). APOE associated to the LVP allows the initial virus attachment to cell surface receptors such as the heparan sulfate proteoglycans (HSPGs), syndecan-1 (SDC1), syndecan-1 (SDC2), the low-density lipoprotein receptor (LDLR) and scavenger receptor class B type I (SCARB1). The cholesterol transfer activity of SCARB1 allows E2 exposure and binding of E2 to SCARB1 and the tetraspanin CD81. E1/E2 heterodimer binding on CD81 activates the epithelial growth factor receptor (EGFR) signaling pathway. Diffusion of the complex E1/E2-EGFR-SCARB1-CD81 to the cell lateral membrane allows further interaction with Claudin 1 (CLDN1) and occludin (OCLN) to finally trigger HCV entry. Inhibits host EIF2AK2/PKR activation, preventing the establishment of an antiviral state. Viral ligand for CD209/DC-SIGN and CLEC4M/DC-SIGNR, which are respectively found on DCs, and on liver sinusoidal endothelial cells and macrophage-like cells of lymph node sinuses. These interactions allow the capture of circulating HCV particles by these cells and subsequent facilitated transmission to permissive cells such as hepatocytes and lymphocyte subpopulations. The interaction between E2 and host amino acid transporter complex formed by SLC3A2 and SLC7A5/LAT1 may facilitate viral entry into host cell. Its function is as follows. Ion channel protein that acts as a viroporin and plays an essential role in the assembly, envelopment and secretion of viral particles. Participates in virus envelopment by coordinating the encounter between NS5A and NS2-based assembly sites loaded with E1/E2 heterodimer, which subsequently leads to nucleocapsid envelopment. Creates a pore in acidic organelles and releases Ca(2+) and H(+) in the cytoplasm of infected cells, leading to a productive viral infection. High levels of cytoplasmic Ca(2+) may trigger membrane trafficking and transport of viral ER-associated proteins to viroplasms, sites of viral genome replication. The release of Ca(2+) may also activate the inflamasome leading to chronic inflammation. Targets also host mitochondria and induces mitochondrial depolarization. In addition of its role as a viroporin, acts as a lipid raft adhesion factor. Cysteine protease required for the proteolytic auto-cleavage between the non-structural proteins NS2 and NS3. The N-terminus of NS3 is required for the function of NS2 protease (active region NS2-3). Promotes the initiation of viral particle assembly by mediating the interaction between structural and non-structural proteins. In terms of biological role, displays three enzymatic activities: serine protease with a chymotrypsin-like fold, NTPase and RNA helicase. NS3 serine protease, in association with NS4A, is responsible for the cleavages of NS3-NS4A, NS4A-NS4B, NS4B-NS5A and NS5A-NS5B. The NS3/NS4A complex prevents phosphorylation of host IRF3, thus preventing the establishment of dsRNA induced antiviral state. The NS3/NS4A complex induces host amino acid transporter component SLC3A2, thus contributing to HCV propagation. NS3 RNA helicase binds to RNA and unwinds both dsDNA and dsRNA in the 3' to 5' direction, and likely resolves RNA complicated stable secondary structures in the template strand. Binds a single ATP and catalyzes the unzipping of a single base pair of dsRNA. Inhibits host antiviral proteins TBK1 and IRF3 thereby preventing the establishment of an antiviral state. Cleaves host MAVS/CARDIF thereby preventing the establishment of an antiviral state. Cleaves host TICAM1/TRIF, thereby disrupting TLR3 signaling and preventing the establishment of an antiviral state. Functionally, peptide cofactor which forms a non-covalent complex with the N-terminal of NS3 serine protease. The NS3/NS4A complex prevents phosphorylation of host IRF3, thus preventing the establishment of dsRNA induced antiviral state. The NS3/NS4A complex induces host amino acid transporter component SLC3A2, thus contributing to HCV propagation. Its function is as follows. Induces a specific membrane alteration that serves as a scaffold for the virus replication complex. This membrane alteration gives rise to the so-called ER-derived membranous web that contains the replication complex. NS4B self-interaction contributes to its function in membranous web formation. Promotes host TRIF protein degradation in a CASP8-dependent manner thereby inhibiting host TLR3-mediated interferon signaling. Disrupts the interaction between STING and TBK1 contributing to the inhibition of interferon signaling. Phosphorylated protein that is indispensable for viral replication and assembly. Both hypo- and hyperphosphorylated states are required for the viral life cycle. The hyperphosphorylated form of NS5A is an inhibitor of viral replication. Involved in RNA-binding and especially in binding to the viral genome. Zinc is essential for RNA-binding. Participates in the viral particle production as a result of its interaction with the viral mature core protein. Its interaction with host VAPB may target the viral replication complex to vesicles. Down-regulates viral IRES translation initiation. Mediates interferon resistance, presumably by interacting with and inhibiting host EIF2AK2/PKR. Prevents BIN1-induced apoptosis. Acts as a transcriptional activator of some host genes important for viral replication when localized in the nucleus. Via the interaction with host PACSIN2, modulates lipid droplet formation in order to promote virion assembly. Modulates TNFRSF21/DR6 signaling pathway for viral propagation. In terms of biological role, RNA-dependent RNA polymerase that performs primer-template recognition and RNA synthesis during viral replication. Initiates RNA transcription/replication at a flavin adenine dinucleotide (FAD), resulting in a 5'- FAD cap on viral RNAs. In this way, recognition of viral 5' RNA by host pattern recognition receptors can be bypassed, thereby evading activation of antiviral pathways. In Homo sapiens (Human), this protein is Genome polyprotein.